Here is a 923-residue protein sequence, read N- to C-terminus: Rap guanine nucleotide exchange factor 3 (923 aa).

Phosphoserine is present on S79. Positions 110 to 186 (ATCPNLIRDR…RDAQFYRFPG (77 aa)) constitute a DEP domain. The segment at 218 to 242 (TVALRKPPGQRTDEELDLIFEELLH) is interaction with PDE3B. Residues 311–314 (GQLA) and 321–322 (RA) each bind 3',5'-cyclic AMP. One can recognise an N-terminal Ras-GEF domain in the interval 384 to 518 (NRYTVMSGTP…EQWPERRRCH (135 aa)). The interval 398–422 (ELLLEAMGPDSSAHDPTETFLSDFL) is interaction with PDE3B. Phosphoserine is present on residues S528 and S864. The 228-residue stretch at 662 to 889 (SAKDLAGQLT…ARISTCSEQS (228 aa)) folds into the Ras-GEF domain.

As to quaternary structure, interacts with PDE3B and PIK3R6; form a signaling complex that regulates phosphatidylinositol 3-kinase gamma in angiogenesis. Widely expressed with highest levels in adult kidney, heart, thyroid and brain, and fetal kidney.

The protein resides in the endomembrane system. Guanine nucleotide exchange factor (GEF) for RAP1A and RAP2A small GTPases that is activated by binding cAMP. Through simultaneous binding of PDE3B to RAPGEF3 and PIK3R6 is assembled in a signaling complex in which it activates the PI3K gamma complex and which is involved in angiogenesis. Plays a role in the modulation of the cAMP-induced dynamic control of endothelial barrier function through a pathway that is independent on Rho-mediated signaling. Required for the actin rearrangement at cell-cell junctions, such as stress fibers and junctional actin. This is Rap guanine nucleotide exchange factor 3 (RAPGEF3) from Homo sapiens (Human).